Reading from the N-terminus, the 497-residue chain is Probable cytosol aminopeptidase (497 aa).

Mn(2+)-binding residues include K263 and D268. The active site involves K275. 3 residues coordinate Mn(2+): D286, D345, and E347. Residue R349 is part of the active site.

It belongs to the peptidase M17 family. Requires Mn(2+) as cofactor.

The protein resides in the cytoplasm. The enzyme catalyses Release of an N-terminal amino acid, Xaa-|-Yaa-, in which Xaa is preferably Leu, but may be other amino acids including Pro although not Arg or Lys, and Yaa may be Pro. Amino acid amides and methyl esters are also readily hydrolyzed, but rates on arylamides are exceedingly low.. It catalyses the reaction Release of an N-terminal amino acid, preferentially leucine, but not glutamic or aspartic acids.. In terms of biological role, presumably involved in the processing and regular turnover of intracellular proteins. Catalyzes the removal of unsubstituted N-terminal amino acids from various peptides. In Allorhizobium ampelinum (strain ATCC BAA-846 / DSM 112012 / S4) (Agrobacterium vitis (strain S4)), this protein is Probable cytosol aminopeptidase.